The primary structure comprises 376 residues: WW domain-binding protein 4 (376 aa).

The Matrin-type zinc-finger motif lies at 11-42 (KFCDYCKCWIADNRPSVEFHERGKNHKENVAR). Positions 94–111 (PTVSPVISTVQPTPTSNQ) are enriched in polar residues. Disordered regions lie at residues 94–127 (PTVS…ASKG) and 192–324 (WEKP…ECLS). Basic residues predominate over residues 114–123 (EKKKKKKKKE). WW domains follow at residues 123–156 (EASK…KPEG) and 164–197 (TAAK…KPED). A compositionally biased stretch (basic and acidic residues) spans 219 to 272 (EDAKSSDSHSDSEGEQKKAGEASTETKKLIIKFKEKNKSTEKRIGPEIQKEKST). Residues serine 228 and serine 230 each carry the phosphoserine modification. The interaction with SNRNP200 stretch occupies residues 357–375 (KKRRLENGKSRNLRQRGDD).

In terms of assembly, component of the spliceosome B complex. Associated with U2 snRNPs. Binds splicing factors SNRPB, SNRPC and SF1. Interacts via the WW domains with the Pro-rich domains of KHDRBS1/SAM68. Interacts via the WW domains with the Pro-rich domains of WBP11. Interacts with SNRNP200.

It localises to the nucleus. It is found in the nucleus speckle. In terms of biological role, involved in pre-mRNA splicing as a component of the spliceosome. May play a role in cross-intron bridging of U1 and U2 snRNPs in the mammalian A complex. This chain is WW domain-binding protein 4 (Wbp4), found in Mus musculus (Mouse).